The primary structure comprises 102 residues: Aspartyl/glutamyl-tRNA(Asn/Gln) amidotransferase subunit C (102 aa).

It belongs to the GatC family. As to quaternary structure, heterotrimer of A, B and C subunits.

The enzyme catalyses L-glutamyl-tRNA(Gln) + L-glutamine + ATP + H2O = L-glutaminyl-tRNA(Gln) + L-glutamate + ADP + phosphate + H(+). It carries out the reaction L-aspartyl-tRNA(Asn) + L-glutamine + ATP + H2O = L-asparaginyl-tRNA(Asn) + L-glutamate + ADP + phosphate + 2 H(+). Its function is as follows. Allows the formation of correctly charged Asn-tRNA(Asn) or Gln-tRNA(Gln) through the transamidation of misacylated Asp-tRNA(Asn) or Glu-tRNA(Gln) in organisms which lack either or both of asparaginyl-tRNA or glutaminyl-tRNA synthetases. The reaction takes place in the presence of glutamine and ATP through an activated phospho-Asp-tRNA(Asn) or phospho-Glu-tRNA(Gln). The polypeptide is Aspartyl/glutamyl-tRNA(Asn/Gln) amidotransferase subunit C (Mycobacteroides abscessus (strain ATCC 19977 / DSM 44196 / CCUG 20993 / CIP 104536 / JCM 13569 / NCTC 13031 / TMC 1543 / L948) (Mycobacterium abscessus)).